A 470-amino-acid polypeptide reads, in one-letter code: Cholesterol 7-desaturase nvd 1 (470 aa).

Residues 67–87 (LALCIAGFSVLMYFLYVLVFV) traverse the membrane as a helical segment. The Rieske domain occupies 136 to 238 (FRLVDSQQLE…CREVNKAIFV (103 aa)). The [2Fe-2S] cluster site is built by Cys-176, His-178, Cys-196, and His-199.

This sequence belongs to the cholesterol 7-desaturase family. It depends on [2Fe-2S] cluster as a cofactor.

The protein resides in the membrane. The catalysed reaction is cholesterol + NADPH + O2 + H(+) = 7-dehydrocholesterol + NADP(+) + 2 H2O. The enzyme catalyses cholesterol + NADH + O2 + H(+) = 7-dehydrocholesterol + NAD(+) + 2 H2O. It functions in the pathway steroid hormone biosynthesis; dafachronic acid biosynthesis. Its function is as follows. Catalyzes the production of 7-dehydrocholesterol (7-DHC or cholesta-5,7-dien-3beta-ol) by inserting a double bond (desaturating) at the C7-C8 single bond of cholesterol. Essential regulator of steroid biosynthesis as this reaction is the first step in the synthesis of the steroid hormone Delta(7)-dafachronic acid. This Ciona intestinalis (Transparent sea squirt) protein is Cholesterol 7-desaturase nvd 1.